A 368-amino-acid chain; its full sequence is HECT-type ubiquitin ligase-interacting protein apyA (368 aa).

It belongs to the arrestin family. In terms of assembly, interacts with hulA.

May be involved in signaling by recognizing appropriately phosphorylated substrates via its arrestin domains and then recruit a HECT-type ubiquitin ligase such as hulA, leading to ubiquitination of the substrate, providing a link between ubiquitination and phosphorylation in protein regulation and stability. This is HECT-type ubiquitin ligase-interacting protein apyA (apyA) from Emericella nidulans (strain FGSC A4 / ATCC 38163 / CBS 112.46 / NRRL 194 / M139) (Aspergillus nidulans).